Consider the following 131-residue polypeptide: Glycine cleavage system H protein (131 aa).

A Lipoyl-binding domain is found at 24–106; it reads TVRVGITDYA…YGEGWLVDLR (83 aa). K65 bears the N6-lipoyllysine mark.

Belongs to the GcvH family. The glycine cleavage system is composed of four proteins: P, T, L and H. It depends on (R)-lipoate as a cofactor.

Its function is as follows. The glycine cleavage system catalyzes the degradation of glycine. The H protein shuttles the methylamine group of glycine from the P protein to the T protein. This Mycolicibacterium smegmatis (strain ATCC 700084 / mc(2)155) (Mycobacterium smegmatis) protein is Glycine cleavage system H protein.